Reading from the N-terminus, the 25-residue chain is Non-specific lipid-transfer protein 3 (25 aa).

As to expression, seeds (at protein level).

Its function is as follows. Plant non-specific lipid-transfer proteins transfer phospholipids as well as galactolipids across membranes. May play a role in wax or cutin deposition in the cell walls of expanding epidermal cells and certain secretory tissues. Has antibacterial and antifungal activity. Displays antibacterial activity towards both Gram-negative bacteria, P.carotovorum (IC(50)=11.5 uM) and P.syringae (IC(50)=12.0 uM), and Gram-positive bacterium C.michiganensis subsp michiganense (IC(50)=11.2 uM). Also displays antifungal activity towards A.niger VKM F-33 (IC(50)=1.05 uM) and B.cinerea TSKHA (IC(50)=1.88 uM) and relatively moderate activity towards B.sorokiniana VKM F-1448 (IC(50)=1.55 uM). Displays some inhibitory activity towards P.infestans OSV12. The chain is Non-specific lipid-transfer protein 3 from Nigella sativa (Black cumin).